A 160-amino-acid polypeptide reads, in one-letter code: Ribosomal RNA large subunit methyltransferase H (160 aa).

Residues L77, G109, and 128–133 each bind S-adenosyl-L-methionine; that span reads FSRLTF.

The protein belongs to the RNA methyltransferase RlmH family. Homodimer.

It is found in the cytoplasm. The catalysed reaction is pseudouridine(1915) in 23S rRNA + S-adenosyl-L-methionine = N(3)-methylpseudouridine(1915) in 23S rRNA + S-adenosyl-L-homocysteine + H(+). Functionally, specifically methylates the pseudouridine at position 1915 (m3Psi1915) in 23S rRNA. In Desulfitobacterium hafniense (strain DSM 10664 / DCB-2), this protein is Ribosomal RNA large subunit methyltransferase H.